The chain runs to 642 residues: Pentatricopeptide repeat-containing protein At3g16010 (642 aa).

PPR repeat units lie at residues 125 to 159 (DCST…TYVS), 161 to 195 (SPAV…KCKP), 196 to 230 (TSST…GDCF), 232 to 266 (DTIT…CMQP), 267 to 301 (TEKI…GCSP), 302 to 336 (TVYT…GLTP), 337 to 371 (DVVF…RCTP), 372 to 407 (TVVS…SVSP), 408 to 442 (SEFT…GFPP), 443 to 473 (CPAA…LKEN), 478 to 512 (SSRV…GSGP), 513 to 547 (DVYA…GCRA), 548 to 582 (DINS…GIKP), and 583 to 617 (DGVT…GFEY).

It belongs to the PPR family. P subfamily.

The polypeptide is Pentatricopeptide repeat-containing protein At3g16010 (Arabidopsis thaliana (Mouse-ear cress)).